A 230-amino-acid chain; its full sequence is Uracil-DNA glycosylase (230 aa).

Asp70 functions as the Proton acceptor in the catalytic mechanism.

Belongs to the uracil-DNA glycosylase (UDG) superfamily. UNG family.

It is found in the cytoplasm. It catalyses the reaction Hydrolyzes single-stranded DNA or mismatched double-stranded DNA and polynucleotides, releasing free uracil.. Its function is as follows. Excises uracil residues from the DNA which can arise as a result of misincorporation of dUMP residues by DNA polymerase or due to deamination of cytosine. This Pseudomonas putida (strain ATCC 700007 / DSM 6899 / JCM 31910 / BCRC 17059 / LMG 24140 / F1) protein is Uracil-DNA glycosylase.